Consider the following 130-residue polypeptide: Large ribosomal subunit protein bL19 (130 aa).

This sequence belongs to the bacterial ribosomal protein bL19 family.

This protein is located at the 30S-50S ribosomal subunit interface and may play a role in the structure and function of the aminoacyl-tRNA binding site. In Cupriavidus taiwanensis (strain DSM 17343 / BCRC 17206 / CCUG 44338 / CIP 107171 / LMG 19424 / R1) (Ralstonia taiwanensis (strain LMG 19424)), this protein is Large ribosomal subunit protein bL19.